Here is a 477-residue protein sequence, read N- to C-terminus: Myc-associated zinc finger protein (477 aa).

Disordered stretches follow at residues 59–78 and 121–146; these read AQSP…APAA and TVDT…PAAE. Pro residues predominate over residues 130-141; sequence PPAPPPPPPPVS. 4 consecutive C2H2-type zinc fingers follow at residues 190–212, 279–301, 307–329, and 337–360; these read YICA…EAIH, HACE…KLSH, YQCP…VRSH, and YNCS…RQVH. Ser361 is modified (phosphoserine). The C2H2-type 5 zinc-finger motif lies at 366–388; sequence FKCEKCEAAFATKDRLRAHTVRH. Residues 392-413 form a C2H2-type 6; atypical zinc finger; that stretch reads VPCHVCGKMLSSAYISDHMKVH.

In terms of assembly, interacts with BPTF. As to quaternary structure, forms a heterodimer with MAZ isoform 2; the interaction inhibits MAZ isoform 1-mediated transcription activation. Forms a heterodimer with MAZ isoform 1; the interaction inhibits MAZ isoform 1-mediated transcription activation. In terms of tissue distribution, present in kidney, liver and brain. In the brain, highest levels are found in motor cortex and midfrontal cortex (at protein level). Expressed in the heart, brain, placenta, lung, liver, skeletal muscle and weakly expressed in the kidney. Expressed in the joint synovium.

It localises to the nucleus. Its function is as follows. Transcriptional regulator, potentially with dual roles in transcription initiation and termination. Binds DNA and functions as a transcriptional activator. Binds to two G/A-rich sites, ME1a1 and ME1a2, within the MYC promoter having greater affinity for the former. Also binds to multiple G/C-rich sites within the promoter of the Sp1 family of transcription factors. Functionally, binds DNA and functions as a transcriptional activator. Inhibits MAZ isoform 1-mediated transcription. In terms of biological role, binds DNA and functions as a transcriptional activator. This is Myc-associated zinc finger protein (MAZ) from Homo sapiens (Human).